We begin with the raw amino-acid sequence, 67 residues long: Large ribosomal subunit protein uL29 (67 aa).

The protein belongs to the universal ribosomal protein uL29 family.

The protein is Large ribosomal subunit protein uL29 of Desulfitobacterium hafniense (strain Y51).